A 753-amino-acid chain; its full sequence is Neuroendocrine convertase 1 (753 aa).

An N-terminal signal peptide occupies residues 1 to 27; that stretch reads MGRRAWTLQCTAFSLFCAWCAMNSVKA. Positions 28-110 are excised as a propeptide; it reads KKQFVNEWAA…QQYEKERSKR (83 aa). One can recognise a Peptidase S8 domain in the interval 129-450; the sequence is QWYLQDTRMT…FGLLNAKALV (322 aa). Aspartate 167 serves as the catalytic Charge relay system. Asparagine 173 carries N-linked (GlcNAc...) asparagine glycosylation. Histidine 208 acts as the Charge relay system in catalysis. Disulfide bonds link cysteine 225–cysteine 374 and cysteine 317–cysteine 347. The Charge relay system role is filled by serine 382. Asparagine 401 is a glycosylation site (N-linked (GlcNAc...) asparagine). The P/Homo B domain maps to 460–597; that stretch reads SVPEKKECVV…KLILHGTSSQ (138 aa). Cysteines 467 and 494 form a disulfide. Disordered regions lie at residues 617–657 and 676–695; these read RRGV…RRDE and SKNS…KPNI.

It belongs to the peptidase S8 family. Furin subfamily. The cofactor is Ca(2+).

It is found in the cytoplasmic vesicle. It localises to the secretory vesicle. The catalysed reaction is Release of protein hormones, neuropeptides and renin from their precursors, generally by hydrolysis of -Lys-Arg-|- bonds.. Functionally, involved in the processing of hormone and other protein precursors at sites comprised of pairs of basic amino acid residues. Substrates include POMC, renin, enkephalin, dynorphin, somatostatin, insulin and AGRP. The protein is Neuroendocrine convertase 1 (PCSK1) of Bos taurus (Bovine).